A 164-amino-acid polypeptide reads, in one-letter code: Pyruvoyl-dependent arginine decarboxylase (164 aa).

Position 52 is a pyruvic acid (Ser) (S52).

It belongs to the PdaD family. It depends on pyruvate as a cofactor.

The enzyme catalyses L-arginine + H(+) = agmatine + CO2. This chain is Pyruvoyl-dependent arginine decarboxylase, found in Methanococcus maripaludis (strain C6 / ATCC BAA-1332).